A 391-amino-acid chain; its full sequence is Nucleosome assembly protein 1-like 1 (391 aa).

Methionine 1 bears the N-acetylmethionine mark. A compositionally biased stretch (basic and acidic residues) spans 1–10; sequence MADIDNKEQS. A disordered region spans residues 1 to 32; it reads MADIDNKEQSELDQDLDDVEEVEEEETGEETK. Alanine 2 is subject to N-acetylalanine. Residue serine 10 is modified to Phosphoserine. Acidic residues predominate over residues 11–28; sequence ELDQDLDDVEEVEEEETG. Threonine 62 and threonine 64 each carry phosphothreonine. Phosphoserine is present on serine 69. At lysine 116 the chain carries N6-acetyllysine. The NAP1L motif motif lies at 125-150; sequence YEPTEEECEWKPDEEDEISEELKEKA. A compositionally biased stretch (acidic residues) spans 132–143; that stretch reads CEWKPDEEDEIS. The segment at 132-163 is disordered; that stretch reads CEWKPDEEDEISEELKEKAKIEDEKKDEEKED. The residue at position 143 (serine 143) is a Phosphoserine. A compositionally biased stretch (basic and acidic residues) spans 144–163; it reads EELKEKAKIEDEKKDEEKED. The Nuclear localization signal signature appears at 273–279; it reads IKKKQKH. A compositionally biased stretch (acidic residues) spans 346-376; that stretch reads AIEDDDDDYDEEGEEADEEGEEEGDEENDPD. The disordered stretch occupies residues 346–391; the sequence is AIEDDDDDYDEEGEEADEEGEEEGDEENDPDYDPKKDQNPAECKQQ. Basic and acidic residues predominate over residues 377 to 391; it reads YDPKKDQNPAECKQQ. The residue at position 388 (cysteine 388) is a Cysteine methyl ester. Cysteine 388 carries S-farnesyl cysteine lipidation. The propeptide at 389-391 is removed in mature form; it reads KQQ.

This sequence belongs to the nucleosome assembly protein (NAP) family. Homodimer. The dimer binds strongly and sequentially to single and double H2A-H2B heterodimers. Interacts with ERCC6; this interaction increases ERCC6 processivity. Interacts with RAD54. Interacts with SETD1A. As to quaternary structure, (Microbial infection) Interacts with human herpesvirus 8 protein LANA1 (via N-terminus); this interaction is required for LANA1-dependent DNA replication. In terms of assembly, (Microbial infection) Interacts with hepatitis virus protein NS5A (via C-terminus); this interaction sequesters NAP1L1 in the cytoplasm, blocking its nuclear translocation. (Microbial infection) Interacts with Chikungunya virus non-structural protein 3 (via C-terminus). In terms of processing, monoglycylated on glutamate residues. Cannot be polyglycylated due to the absence of functional TTLL10 in human. Polyglutamylated by TTLL4 on glutamate residues, resulting in polyglutamate chains on the gamma-carboxyl group. Both polyglutamylation and monoglycylation modifications can coexist on the same protein on adjacent residues, and lowering polyglycylation levels increases polyglutamylation, and reciprocally. Ubiquitously expressed.

The protein resides in the nucleus. It localises to the melanosome. Its subcellular location is the cytoplasm. Histone chaperone that plays a role in the nuclear import of H2A-H2B and nucleosome assembly. Also participates in several important DNA repair mechanisms: greatly enhances ERCC6-mediated chromatin remodeling which is essential for transcription-coupled nucleotide excision DNA repair. Also stimulates homologous recombination (HR) by RAD51 and RAD54 which is essential in mitotic DNA double strand break (DSB) repair. Plays a key role in the regulation of embryonic neurogenesis. Promotes the proliferation of neural progenitors and inhibits neuronal differentiation during cortical development. Regulates neurogenesis via the modulation of RASSF10; regulates RASSF10 expression by promoting SETD1A-mediated H3K4 methylation at the RASSF10 promoter. Its function is as follows. (Microbial infection) Positively regulates Epstein-Barr virus reactivation in epithelial cells through the induction of viral BZLF1 expression. Functionally, (Microbial infection) Together with human herpesvirus 8 protein LANA1, assists the proper assembly of the nucleosome on the replicated viral DNA. The polypeptide is Nucleosome assembly protein 1-like 1 (NAP1L1) (Homo sapiens (Human)).